Here is a 355-residue protein sequence, read N- to C-terminus: DNA polymerase IV (355 aa).

The UmuC domain maps to 4 to 185 (IIHIDMDCYF…LSLGKIPGVG (182 aa)). Positions 8 and 103 each coordinate Mg(2+). Glu-104 is a catalytic residue.

Belongs to the DNA polymerase type-Y family. As to quaternary structure, monomer. The cofactor is Mg(2+).

It localises to the cytoplasm. The enzyme catalyses DNA(n) + a 2'-deoxyribonucleoside 5'-triphosphate = DNA(n+1) + diphosphate. Its function is as follows. Poorly processive, error-prone DNA polymerase involved in untargeted mutagenesis. Copies undamaged DNA at stalled replication forks, which arise in vivo from mismatched or misaligned primer ends. These misaligned primers can be extended by PolIV. Exhibits no 3'-5' exonuclease (proofreading) activity. May be involved in translesional synthesis, in conjunction with the beta clamp from PolIII. The polypeptide is DNA polymerase IV (Shewanella amazonensis (strain ATCC BAA-1098 / SB2B)).